The primary structure comprises 215 residues: Protein-L-isoaspartate O-methyltransferase (215 aa).

The active site involves serine 62.

It belongs to the methyltransferase superfamily. L-isoaspartyl/D-aspartyl protein methyltransferase family.

Its subcellular location is the cytoplasm. The enzyme catalyses [protein]-L-isoaspartate + S-adenosyl-L-methionine = [protein]-L-isoaspartate alpha-methyl ester + S-adenosyl-L-homocysteine. Its function is as follows. Catalyzes the methyl esterification of L-isoaspartyl residues in peptides and proteins that result from spontaneous decomposition of normal L-aspartyl and L-asparaginyl residues. It plays a role in the repair and/or degradation of damaged proteins. In Bradyrhizobium sp. (strain BTAi1 / ATCC BAA-1182), this protein is Protein-L-isoaspartate O-methyltransferase.